Consider the following 240-residue polypeptide: REF/SRPP-like protein At1g67360 (240 aa).

The interval Lys208–Glu240 is disordered.

The protein belongs to the REF/SRPP family.

The chain is REF/SRPP-like protein At1g67360 from Arabidopsis thaliana (Mouse-ear cress).